Reading from the N-terminus, the 205-residue chain is Gap junction epsilon-1 protein (205 aa).

Topologically, residues M1–Q22 are cytoplasmic. A helical transmembrane segment spans residues F23–V43. Over Y44–Q74 the chain is Extracellular. 2 disulfides stabilise this stretch: C53–C161 and C64–C147. Residues V75–A95 traverse the membrane as a helical segment. Over A96–Y111 the chain is Cytoplasmic. Residues T112–L132 traverse the membrane as a helical segment. Residues Q133 to T170 lie on the Extracellular side of the membrane. A helical membrane pass occupies residues I171–V191. Residues F192–R205 lie on the Cytoplasmic side of the membrane.

It belongs to the connexin family. Beta-type (group I) subfamily. A connexon is composed of a hexamer of connexins. Highly expressed in lens, where it is mainly found in lens fibers and to a lesser extent in lens epithelium. Weakly expressed in retina. Not detected in other tissues tested.

Its subcellular location is the cell membrane. Functionally, mediates calcium-independent ATP release, suggesting activity as a hemichannel. Does not form functional gap junctions. May play a non-essential role in eye lens development. The polypeptide is Gap junction epsilon-1 protein (Mus musculus (Mouse)).